Here is a 124-residue protein sequence, read N- to C-terminus: V-type proton ATPase subunit F 1 (124 aa).

This sequence belongs to the V-ATPase F subunit family. V-ATPase is a heteromultimeric enzyme made up of two complexes: the ATP-hydrolytic V1 complex and the proton translocation V0 complex. The V1 complex consists of three catalytic AB heterodimers that form a heterohexamer, three peripheral stalks each consisting of EG heterodimers, one central rotor including subunits D and F, and the regulatory subunits C and H. The proton translocation complex V0 consists of the proton transport subunit a, a ring of proteolipid subunits c9c'', rotary subunit d, subunits e and f, and the accessory subunits VhaAC45 and ATP6AP2.

Functionally, subunit of the V1 complex of vacuolar(H+)-ATPase (V-ATPase), a multisubunit enzyme composed of a peripheral complex (V1) that hydrolyzes ATP and a membrane integral complex (V0) that translocates protons. V-ATPase is responsible for acidifying and maintaining the pH of intracellular compartments and in some cell types, is targeted to the plasma membrane, where it is responsible for acidifying the extracellular environment. The sequence is that of V-type proton ATPase subunit F 1 (Vha14) from Drosophila pseudoobscura pseudoobscura (Fruit fly).